A 1855-amino-acid chain; its full sequence is Unconventional myosin-Va (1855 aa).

N-acetylalanine is present on A2. Residues 8–60 (TKFARVWIPDPEEVWKSAELLKDYKPGDKVLLLHLEEGKDLEYHLDPKTKELP) enclose the Myosin N-terminal SH3-like domain. The Myosin motor domain maps to 69–763 (VGENDLTALS…QVAYLEKLRA (695 aa)). 163–170 (GESGAGKT) contributes to the ATP binding site. Residues 598-631 (AISPTSATSSGRTPLTRTPAKPTKGRPGQMAKEH) form a disordered region. Phosphoserine is present on S600. The span at 600–613 (SPTSATSSGRTPLT) shows a compositional bias: polar residues. The interval 643 to 665 (LHLLMETLNATTPHYVRCIKPND) is actin-binding. IQ domains are found at residues 766–788 (LRAA…KYLR), 789–818 (MRKA…TKAA), 814–836 (RTKA…RYKI), 837–861 (RRAA…RKIL), 862–883 (REHK…THYK), and 885–914 (SMHA…EARS). Coiled-coil stretches lie at residues 914–1237 (SVER…APEV) and 1338–1445 (VYEG…ELEV). Position 1032 is a phosphothreonine (T1032). Phosphoserine is present on residues S1452 and S1652. The Dilute domain occupies 1534-1810 (TSTINSIKKV…IRTIQMRLRD (277 aa)). Phosphothreonine is present on T1760.

Belongs to the TRAFAC class myosin-kinesin ATPase superfamily. Myosin family. May be a homodimer, which associates with multiple calmodulin or myosin light chains. Interacts with RIPL2, the interaction is required for its role in dendrite formation. Interacts with MLPH. Interacts with SYTL4. Interacts with MYRIP. Interacts with RAB10; mediates the transport to the plasma membrane of SLC2A4/GLUT4 storage vesicles. Interacts with FMR1; this interaction occurs in association with polyribosome. Detected in melanocytes.

It carries out the reaction ATP + H2O = ADP + phosphate + H(+). Processive actin-based motor that can move in large steps approximating the 36-nm pseudo-repeat of the actin filament. Can hydrolyze ATP in the presence of actin, which is essential for its function as a motor protein. Involved in melanosome transport. Also mediates the transport of vesicles to the plasma membrane. May also be required for some polarization process involved in dendrite formation. The polypeptide is Unconventional myosin-Va (MYO5A) (Homo sapiens (Human)).